The chain runs to 595 residues: Beta-(1--&gt;2)glucan export ATP-binding/permease protein NdvA (595 aa).

The next 5 membrane-spanning stretches (helical) occupy residues 21 to 41, 56 to 76, 129 to 149, 158 to 178, and 252 to 272; these read FLLI…EPIL, LVTL…YVLV, IWLE…VLVP, LSIV…LVMQ, and ISIV…QLSV. Residues 21–301 form the ABC transmembrane type-1 domain; that stretch reads FLLICTANIT…ISGFINLAVS (281 aa). Residues 335–569 enclose the ABC transporter domain; sequence IQFHHVTYEF…DGHFYKLLKR (235 aa). 368–375 contributes to the ATP binding site; sequence GPTGAGKT.

The protein belongs to the ABC transporter superfamily. Beta-(1--&gt;2)glucan exporter (TC 3.A.1.108.1) family. As to quaternary structure, homodimer.

It localises to the cell inner membrane. The catalysed reaction is [(1-&gt;2)-beta-D-glucosyl](n)(in) + ATP + H2O = [(1-&gt;2)-beta-D-glucosyl](n)(out) + ADP + phosphate + H(+). Involved in beta-(1--&gt;2)glucan export. Transmembrane domains (TMD) form a pore in the inner membrane and the ATP-binding domain (NBD) is responsible for energy generation. The chain is Beta-(1--&gt;2)glucan export ATP-binding/permease protein NdvA from Bartonella bacilliformis.